The sequence spans 239 residues: Dephospho-CoA kinase (239 aa).

The DPCK domain maps to 3–206; the sequence is IIGLTGSIAS…GGEGGEPAAG (204 aa). 11 to 16 is a binding site for ATP; that stretch reads ASGKST. Residues 197–239 form a disordered region; the sequence is GGEGGEPAAGSSAHHGAGSVDPGAGPCDGPGAAPEAERRGGDR. Residues 204 to 230 are compositionally biased toward low complexity; sequence AAGSSAHHGAGSVDPGAGPCDGPGAAP.

The protein belongs to the CoaE family.

The protein localises to the cytoplasm. The enzyme catalyses 3'-dephospho-CoA + ATP = ADP + CoA + H(+). Its pathway is cofactor biosynthesis; coenzyme A biosynthesis; CoA from (R)-pantothenate: step 5/5. Functionally, catalyzes the phosphorylation of the 3'-hydroxyl group of dephosphocoenzyme A to form coenzyme A. This Symbiobacterium thermophilum (strain DSM 24528 / JCM 14929 / IAM 14863 / T) protein is Dephospho-CoA kinase.